The chain runs to 1044 residues: Elongation factor 3 (1044 aa).

The HEAT 1 repeat unit spans residues 5-42 (AQSIKVLGELFEKLSVATAENREATATEIASFLNGNII). The ADP site is built by Ile42 and His44. The stretch at 45 to 80 (DVPEEFFKNLTKAVKDKKTAAAALETIAHIANENNL) is one HEAT 2 repeat. Ser83 lines the ADP pocket. HEAT repeat units follow at residues 86-123 (PYIV…AIDP), 124-162 (VAIK…AAKT), 166-203 (LRMP…TVDN), 205-241 (DIER…EVTP), 242-279 (ATLS…LVED), and 285-323 (PFLE…VGNV). 3 residues coordinate ADP: Thr392, His396, and Glu397. ABC transporter domains are found at residues 426–641 (DEGE…YYEL) and 667–993 (VKVS…KKED). ADP is bound by residues Asn703, Glu922, Asn925, and His951. The segment at 975 to 1044 (GHNWVSGQGS…DAYVSSDDEF (70 aa)) is disordered. The segment covering 987–999 (RLEKKEDEGDKFD) has biased composition (basic and acidic residues). Residues 1009–1031 (NKKKKLSSAELRKKKKERMKKKK) are compositionally biased toward basic residues.

This sequence belongs to the ABC transporter superfamily. ABCF family. EF3 subfamily. In terms of assembly, monomer.

The protein resides in the cytoplasm. It catalyses the reaction ATP + H2O = ADP + phosphate + H(+). It functions in the pathway protein biosynthesis; polypeptide chain elongation. Functionally, ribosome-dependent ATPase that functions in cytoplasmic translation elongation. Required for the ATP-dependent release of deacylated tRNA from the ribosomal E-site during protein biosynthesis. Stimulates the eEF1A-dependent binding of aminoacyl-tRNA to the ribosomal A-site, which has reduced affinity for tRNA as long as the E-site is occupied. Assists translation termination by stimulating the release of nascent protein from the ribosome by release factors. The sequence is that of Elongation factor 3 (TEF3) from Eremothecium gossypii (strain ATCC 10895 / CBS 109.51 / FGSC 9923 / NRRL Y-1056) (Yeast).